The primary structure comprises 200 residues: Endoribonuclease YbeY (200 aa).

Pro residues predominate over residues 1-18; that stretch reads MPADPALPDPVPPGPTAP. Residues 1-22 are disordered; that stretch reads MPADPALPDPVPPGPTAPVPTD. 3 residues coordinate Zn(2+): His-151, His-155, and His-161.

The protein belongs to the endoribonuclease YbeY family. It depends on Zn(2+) as a cofactor.

The protein localises to the cytoplasm. Its function is as follows. Single strand-specific metallo-endoribonuclease involved in late-stage 70S ribosome quality control and in maturation of the 3' terminus of the 16S rRNA. The polypeptide is Endoribonuclease YbeY (Rhodospirillum rubrum (strain ATCC 11170 / ATH 1.1.1 / DSM 467 / LMG 4362 / NCIMB 8255 / S1)).